We begin with the raw amino-acid sequence, 257 residues long: Tryptophan synthase alpha chain (257 aa).

Residues Glu47 and Asp58 each act as proton acceptor in the active site.

Belongs to the TrpA family. Tetramer of two alpha and two beta chains.

The catalysed reaction is (1S,2R)-1-C-(indol-3-yl)glycerol 3-phosphate + L-serine = D-glyceraldehyde 3-phosphate + L-tryptophan + H2O. It functions in the pathway amino-acid biosynthesis; L-tryptophan biosynthesis; L-tryptophan from chorismate: step 5/5. In terms of biological role, the alpha subunit is responsible for the aldol cleavage of indoleglycerol phosphate to indole and glyceraldehyde 3-phosphate. The protein is Tryptophan synthase alpha chain of Listeria monocytogenes serotype 4b (strain F2365).